The following is a 481-amino-acid chain: Acetyltransferase peniE (481 aa).

Residues His-164 and Asp-411 each act as proton acceptor in the active site.

This sequence belongs to the plant acyltransferase family. In terms of assembly, monomer.

Acetyltransferase; part of the gene cluster that mediates the biosynthesis of penifulvin A, a potent insecticidal sesquiterpene that features a [5.5.5.6]dioxafenestrane ring. The first step of the pathway is performed by the sesquiterpene cyclase peniA that generates the angular triquinane scaffold silphinene via cyclization of the linear farnesyl pyrophosphate (FPP). The cytochrome P450 monooxygenase peniB and the flavin-dependent monooxygenase peniC then catalyze a series of oxidation reactions to transform silphinene into penifulvin A. The dioxygenases peniD and peniF, as well as the acetyltransferase peniE, do not seem to be involved in the biosynthesis of penifulvin A. The protein is Acetyltransferase peniE of Penicillium patulum (Penicillium griseofulvum).